Reading from the N-terminus, the 288-residue chain is Energy-coupling factor transporter ATP-binding protein EcfA2 (288 aa).

Positions 3–245 (IKIENLTHVY…VDTLESVGLA (243 aa)) constitute an ABC transporter domain. Residue 40–47 (GHTGSGKS) participates in ATP binding.

The protein belongs to the ABC transporter superfamily. Energy-coupling factor EcfA family. As to quaternary structure, forms a stable energy-coupling factor (ECF) transporter complex composed of 2 membrane-embedded substrate-binding proteins (S component), 2 ATP-binding proteins (A component) and 2 transmembrane proteins (T component).

Its subcellular location is the cell membrane. Functionally, ATP-binding (A) component of a common energy-coupling factor (ECF) ABC-transporter complex. Unlike classic ABC transporters this ECF transporter provides the energy necessary to transport a number of different substrates. This is Energy-coupling factor transporter ATP-binding protein EcfA2 from Clostridium tetani (strain Massachusetts / E88).